A 924-amino-acid chain; its full sequence is Isoleucine--tRNA ligase (924 aa).

The short motif at 58-68 (PYANGQIHVGH) is the 'HIGH' region element. Glu561 is an L-isoleucyl-5'-AMP binding site. Residues 602–606 (KMSKS) carry the 'KMSKS' region motif. Residue Lys605 participates in ATP binding. Residues Cys887, Cys890, Cys907, and Cys910 each contribute to the Zn(2+) site.

It belongs to the class-I aminoacyl-tRNA synthetase family. IleS type 1 subfamily. As to quaternary structure, monomer. Zn(2+) is required as a cofactor.

The protein resides in the cytoplasm. It catalyses the reaction tRNA(Ile) + L-isoleucine + ATP = L-isoleucyl-tRNA(Ile) + AMP + diphosphate. Functionally, catalyzes the attachment of isoleucine to tRNA(Ile). As IleRS can inadvertently accommodate and process structurally similar amino acids such as valine, to avoid such errors it has two additional distinct tRNA(Ile)-dependent editing activities. One activity is designated as 'pretransfer' editing and involves the hydrolysis of activated Val-AMP. The other activity is designated 'posttransfer' editing and involves deacylation of mischarged Val-tRNA(Ile). This is Isoleucine--tRNA ligase from Dichelobacter nodosus (strain VCS1703A).